The primary structure comprises 708 residues: Metal-pseudopaline receptor CntO (708 aa).

The first 21 residues, 1-21 (MRVSVSLVLGVGLGCSSPALW), serve as a signal peptide directing secretion. The region spanning 63–169 (RIEDIPQAIS…PGGTVNLVTK (107 aa)) is the TBDR plug domain. A TBDR beta-barrel domain is found at 174 to 708 (ERFARLHASA…NLTMSLTLNY (535 aa)).

Belongs to the TonB-dependent receptor family.

Its subcellular location is the cell outer membrane. Transports the metallophore pseudopaline, which is involved in the acquisition of nickel and zinc, and thus enables bacterial growth inside the host, where metal access is limited. Is probably involved in the import of pseudopaline-metal complexes. This is Metal-pseudopaline receptor CntO from Pseudomonas aeruginosa (strain ATCC 15692 / DSM 22644 / CIP 104116 / JCM 14847 / LMG 12228 / 1C / PRS 101 / PAO1).